The chain runs to 167 residues: SsrA-binding protein (167 aa).

Residues 139–158 show a composition bias toward basic and acidic residues; the sequence is QNHDKRDAAKDRDWQRDKQR. Residues 139–167 form a disordered region; sequence QNHDKRDAAKDRDWQRDKQRVMRRHNRDA.

Belongs to the SmpB family.

The protein localises to the cytoplasm. In terms of biological role, required for rescue of stalled ribosomes mediated by trans-translation. Binds to transfer-messenger RNA (tmRNA), required for stable association of tmRNA with ribosomes. tmRNA and SmpB together mimic tRNA shape, replacing the anticodon stem-loop with SmpB. tmRNA is encoded by the ssrA gene; the 2 termini fold to resemble tRNA(Ala) and it encodes a 'tag peptide', a short internal open reading frame. During trans-translation Ala-aminoacylated tmRNA acts like a tRNA, entering the A-site of stalled ribosomes, displacing the stalled mRNA. The ribosome then switches to translate the ORF on the tmRNA; the nascent peptide is terminated with the 'tag peptide' encoded by the tmRNA and targeted for degradation. The ribosome is freed to recommence translation, which seems to be the essential function of trans-translation. The protein is SsrA-binding protein of Xanthomonas axonopodis pv. citri (strain 306).